The chain runs to 407 residues: Serine/threonine transporter SstT (407 aa).

A run of 9 helical transmembrane segments spans residues 12–32 (GNLIVQICIGIVLGILIGISS), 42–62 (LGILFTSALKAIAPMLVFILI), 81–101 (IIILYIVGTFLASACAVLANF), 141–161 (ALSSGNYLGILTWAIAGGIAL), 179–199 (VLKIVKFIVKLAPFGIFGLVA), 218–238 (ILLVTTMLFVTFVINALIVFF), 245–267 (FPLIFICLRHSAFFAFFTRSSAA), 288–308 (ISIPLGATINMAGAAVTIAIL), and 330–350 (IIATFAACGASGVAGGSLLLI).

This sequence belongs to the dicarboxylate/amino acid:cation symporter (DAACS) (TC 2.A.23) family.

It is found in the cell inner membrane. The enzyme catalyses L-serine(in) + Na(+)(in) = L-serine(out) + Na(+)(out). It catalyses the reaction L-threonine(in) + Na(+)(in) = L-threonine(out) + Na(+)(out). Involved in the import of serine and threonine into the cell, with the concomitant import of sodium (symport system). The protein is Serine/threonine transporter SstT of Campylobacter jejuni subsp. jejuni serotype O:6 (strain 81116 / NCTC 11828).